A 233-amino-acid polypeptide reads, in one-letter code: Ion-translocating oxidoreductase complex subunit E (233 aa).

Transmembrane regions (helical) follow at residues 18-38, 39-59, 69-89, 92-112, 128-148, and 182-202; these read ALVQ…ATNA, LGLG…VSAL, IPIY…LINA, FGLY…CIVI, ALDG…LGAL, and PFLL…LLAG.

The protein belongs to the NqrDE/RnfAE family. In terms of assembly, the complex is composed of six subunits: RnfA, RnfB, RnfC, RnfD, RnfE and RnfG.

It localises to the cell inner membrane. Functionally, part of a membrane-bound complex that couples electron transfer with translocation of ions across the membrane. The sequence is that of Ion-translocating oxidoreductase complex subunit E from Yersinia pseudotuberculosis serotype IB (strain PB1/+).